The sequence spans 200 residues: Small ribosomal subunit protein uS4 (200 aa).

In terms of domain architecture, S4 RNA-binding spans 92 to 155; it reads SRLDAVVYSL…QKLNVIVESV (64 aa).

This sequence belongs to the universal ribosomal protein uS4 family. As to quaternary structure, part of the 30S ribosomal subunit. Contacts protein S5. The interaction surface between S4 and S5 is involved in control of translational fidelity.

Its function is as follows. One of the primary rRNA binding proteins, it binds directly to 16S rRNA where it nucleates assembly of the body of the 30S subunit. In terms of biological role, with S5 and S12 plays an important role in translational accuracy. This Staphylococcus aureus (strain MRSA252) protein is Small ribosomal subunit protein uS4.